Consider the following 364-residue polypeptide: Probable endopolygalacturonase B (364 aa).

A signal peptide spans 1-20 (MHFFQSSLVAATMGAALVAA). The propeptide occupies 21-29 (APAADLETR). A disulfide bridge links cysteine 32 with cysteine 47. 2 N-linked (GlcNAc...) asparagine glycosylation sites follow: asparagine 138 and asparagine 141. 6 PbH1 repeats span residues 159–188 (SDHL…DVGS), 189–210 (STYI…AVNS), 211–231 (GEHI…SIGS), 240–261 (VNDV…RIKT), 269–291 (VTGV…VVQQ), and 303–324 (TNGV…TSSA). Residue aspartate 203 is the Proton donor of the active site. Cysteine 205 and cysteine 221 are oxidised to a cystine. Histidine 225 is an active-site residue. A disulfide bridge connects residues cysteine 331 and cysteine 336. An N-linked (GlcNAc...) asparagine glycan is attached at asparagine 338. A disulfide bond links cysteine 355 and cysteine 364.

The protein belongs to the glycosyl hydrolase 28 family.

The protein resides in the secreted. It catalyses the reaction (1,4-alpha-D-galacturonosyl)n+m + H2O = (1,4-alpha-D-galacturonosyl)n + (1,4-alpha-D-galacturonosyl)m.. In terms of biological role, involved in maceration and soft-rotting of plant tissue. Hydrolyzes the 1,4-alpha glycosidic bonds of de-esterified pectate in the smooth region of the plant cell wall. The protein is Probable endopolygalacturonase B (pgaB) of Aspergillus fumigatus (strain CBS 144.89 / FGSC A1163 / CEA10) (Neosartorya fumigata).